The primary structure comprises 63 residues: Large ribosomal subunit protein bL32 (63 aa).

This sequence belongs to the bacterial ribosomal protein bL32 family.

In Aquifex aeolicus (strain VF5), this protein is Large ribosomal subunit protein bL32 (rpmF).